The chain runs to 511 residues: Transcription factor bHLH28 (511 aa).

Positions 339–388 (DKPLNHVEAERMRREKLNHRFYALRAVVPNVSKMDKTSLLEDAVCYINEL) constitute a bHLH domain.

Homodimer.

The protein resides in the nucleus. This chain is Transcription factor bHLH28 (BHLH28), found in Arabidopsis thaliana (Mouse-ear cress).